We begin with the raw amino-acid sequence, 621 residues long: 1-deoxy-D-xylulose-5-phosphate synthase (621 aa).

Thiamine diphosphate is bound by residues His80 and 121–123 (GHS). Asp152 is a binding site for Mg(2+). Thiamine diphosphate contacts are provided by residues 153-154 (GA), Asn181, Tyr288, and Glu370. Asn181 contacts Mg(2+).

Belongs to the transketolase family. DXPS subfamily. As to quaternary structure, homodimer. Mg(2+) is required as a cofactor. It depends on thiamine diphosphate as a cofactor.

It catalyses the reaction D-glyceraldehyde 3-phosphate + pyruvate + H(+) = 1-deoxy-D-xylulose 5-phosphate + CO2. It participates in metabolic intermediate biosynthesis; 1-deoxy-D-xylulose 5-phosphate biosynthesis; 1-deoxy-D-xylulose 5-phosphate from D-glyceraldehyde 3-phosphate and pyruvate: step 1/1. Its function is as follows. Catalyzes the acyloin condensation reaction between C atoms 2 and 3 of pyruvate and glyceraldehyde 3-phosphate to yield 1-deoxy-D-xylulose-5-phosphate (DXP). The chain is 1-deoxy-D-xylulose-5-phosphate synthase from Shewanella frigidimarina (strain NCIMB 400).